The chain runs to 217 residues: Protein LURP-one-related 2 (217 aa).

This sequence belongs to the LOR family.

Functionally, might be related to the phospholipid scramblase and tubby-like superfamily of membrane tethered transcription factors. The polypeptide is Protein LURP-one-related 2 (Arabidopsis thaliana (Mouse-ear cress)).